The chain runs to 98 residues: Large ribosomal subunit protein uL23 (98 aa).

It belongs to the universal ribosomal protein uL23 family. As to quaternary structure, part of the 50S ribosomal subunit. Contacts protein L29, and trigger factor when it is bound to the ribosome.

Functionally, one of the early assembly proteins it binds 23S rRNA. One of the proteins that surrounds the polypeptide exit tunnel on the outside of the ribosome. Forms the main docking site for trigger factor binding to the ribosome. The polypeptide is Large ribosomal subunit protein uL23 (Methylobacterium sp. (strain 4-46)).